Reading from the N-terminus, the 310-residue chain is Isoflavone reductase homolog A622 (310 aa).

NADP(+)-binding positions include 13–19, Arg-38, and Lys-47; that span reads GGTGYIG. Lys-135 functions as the Proton acceptor in the catalytic mechanism. Position 139 (Arg-139) interacts with NADP(+).

This sequence belongs to the NmrA-type oxidoreductase family. Isoflavone reductase subfamily. Monomer. As to expression, expressed in roots and stems.

It localises to the cytoplasm. It participates in alkaloid biosynthesis; nicotine biosynthesis. In terms of biological role, NADPH-binding protein. Involved in the biosynthesis of pyridine alkaloid natural products, leading mainly to the production of anabasine, anatabine, nicotine and nornicotine, effective deterrents against herbivores with antiparasitic and pesticide properties (neurotoxins); nornicotine serves as the precursor in the synthesis of the carcinogen compound N'-nitrosonornicotine (NNN). Reductase involved in a late step of tobacco alkaloid biosynthesis. Triggers either the formation of a nicotinic acid-derived precursor or the final condensation reaction of tobacco alkaloids. This Nicotiana sylvestris (Wood tobacco) protein is Isoflavone reductase homolog A622.